Consider the following 831-residue polypeptide: Isethionate sulfite-lyase (831 aa).

A PFL domain is found at 32–701; the sequence is PRVFRLLERF…VVSATPNGRT (670 aa). Residues R189, Q193, 468 to 470, and R679 each bind 2-hydroxyethane-1-sulfonate; that span reads CTE. Residue C468 is the Cysteine radical intermediate of the active site. Catalysis depends on E470, which acts as the Proton acceptor. Positions 708–831 constitute a Glycine radical domain; sequence DGSSASHGAD…LIARTEHDVM (124 aa). G806 carries the post-translational modification Glycine radical.

It belongs to the glycyl radical enzyme (GRE) family. Homodimer. Post-translationally, requires the activating protein IslB to generate the key active site glycyl radical on Gly-806 that is involved in catalysis.

The catalysed reaction is 2-hydroxyethane-1-sulfonate = acetaldehyde + sulfite + H(+). It participates in organosulfur degradation; alkanesulfonate degradation. In terms of biological role, involved in an anaerobic respiration pathway that converts the sulfonate isethionate (2-hydroxyethanesulfonate) to ammonia, acetate and sulfide. Catalyzes the radical-mediated C-S bond cleavage of isethionate (2-hydroxyethanesulfonate) to form sulfite and acetaldehyde. The chain is Isethionate sulfite-lyase from Desulfovibrio desulfuricans (strain ATCC 27774 / DSM 6949 / MB).